A 260-amino-acid polypeptide reads, in one-letter code: Malonyl-[acyl-carrier protein] O-methyltransferase (260 aa).

This sequence belongs to the methyltransferase superfamily.

The catalysed reaction is malonyl-[ACP] + S-adenosyl-L-methionine = malonyl-[ACP] methyl ester + S-adenosyl-L-homocysteine. It participates in cofactor biosynthesis; biotin biosynthesis. Functionally, converts the free carboxyl group of a malonyl-thioester to its methyl ester by transfer of a methyl group from S-adenosyl-L-methionine (SAM). It allows to synthesize pimeloyl-ACP via the fatty acid synthetic pathway. This chain is Malonyl-[acyl-carrier protein] O-methyltransferase, found in Chlorobium phaeovibrioides (strain DSM 265 / 1930) (Prosthecochloris vibrioformis (strain DSM 265)).